A 174-amino-acid polypeptide reads, in one-letter code: Interferon gamma (174 aa).

Residues 1 to 23 (MHTTRCILALLLCLTQAMSGCYC) form the signal peptide. Gln-24 is subject to Pyrrolidone carboxylic acid. 2 N-linked (GlcNAc...) asparagine glycosylation sites follow: Asn-39 and Asn-106.

It belongs to the type II (or gamma) interferon family. As to quaternary structure, homodimer. Interacts with IFNGR1 (via extracellular domain); this interaction promotes IFNGR1 dimerization. Released primarily from activated T lymphocytes.

Its subcellular location is the secreted. Functionally, type II interferon produced by immune cells such as T-cells and NK cells that plays crucial roles in antimicrobial, antiviral, and antitumor responses by activating effector immune cells and enhancing antigen presentation. Primarily signals through the JAK-STAT pathway after interaction with its receptor IFNGR1 to affect gene regulation. Upon IFNG binding, IFNGR1 intracellular domain opens out to allow association of downstream signaling components JAK2, JAK1 and STAT1, leading to STAT1 activation, nuclear translocation and transcription of IFNG-regulated genes. Many of the induced genes are transcription factors such as IRF1 that are able to further drive regulation of a next wave of transcription. Plays a role in class I antigen presentation pathway by inducing a replacement of catalytic proteasome subunits with immunoproteasome subunits. In turn, increases the quantity, quality, and repertoire of peptides for class I MHC loading. Increases the efficiency of peptide generation also by inducing the expression of activator PA28 that associates with the proteasome and alters its proteolytic cleavage preference. Up-regulates as well MHC II complexes on the cell surface by promoting expression of several key molecules such as cathepsins B/CTSB, H/CTSH, and L/CTSL. Participates in the regulation of hematopoietic stem cells during development and under homeostatic conditions by affecting their development, quiescence, and differentiation. The chain is Interferon gamma (IFNG) from Mesocricetus auratus (Golden hamster).